The chain runs to 306 residues: Ornithine carbamoyltransferase (306 aa).

Carbamoyl phosphate contacts are provided by residues Ser-54–Thr-57, Gln-81, Arg-105, and His-132–Gln-135. Residues Asn-162, Asp-226, and Ser-230–Met-231 contribute to the L-ornithine site. Residues Cys-266–Leu-267 and Arg-294 contribute to the carbamoyl phosphate site.

The protein belongs to the aspartate/ornithine carbamoyltransferase superfamily. OTCase family.

The protein localises to the cytoplasm. It carries out the reaction carbamoyl phosphate + L-ornithine = L-citrulline + phosphate + H(+). Its pathway is amino-acid biosynthesis; L-arginine biosynthesis; L-arginine from L-ornithine and carbamoyl phosphate: step 1/3. In terms of biological role, reversibly catalyzes the transfer of the carbamoyl group from carbamoyl phosphate (CP) to the N(epsilon) atom of ornithine (ORN) to produce L-citrulline. The sequence is that of Ornithine carbamoyltransferase from Sulfurisphaera tokodaii (strain DSM 16993 / JCM 10545 / NBRC 100140 / 7) (Sulfolobus tokodaii).